The sequence spans 55 residues: Large ribosomal subunit protein bL33 (55 aa).

It belongs to the bacterial ribosomal protein bL33 family.

In Escherichia coli (strain K12 / DH10B), this protein is Large ribosomal subunit protein bL33.